We begin with the raw amino-acid sequence, 113 residues long: Large ribosomal subunit protein uL22 (113 aa).

The protein belongs to the universal ribosomal protein uL22 family. Part of the 50S ribosomal subunit.

Functionally, this protein binds specifically to 23S rRNA; its binding is stimulated by other ribosomal proteins, e.g. L4, L17, and L20. It is important during the early stages of 50S assembly. It makes multiple contacts with different domains of the 23S rRNA in the assembled 50S subunit and ribosome. Its function is as follows. The globular domain of the protein is located near the polypeptide exit tunnel on the outside of the subunit, while an extended beta-hairpin is found that lines the wall of the exit tunnel in the center of the 70S ribosome. The chain is Large ribosomal subunit protein uL22 from Roseiflexus sp. (strain RS-1).